Consider the following 182-residue polypeptide: Ribosome-recycling factor (182 aa).

It belongs to the RRF family.

It localises to the cytoplasm. In terms of biological role, responsible for the release of ribosomes from messenger RNA at the termination of protein biosynthesis. May increase the efficiency of translation by recycling ribosomes from one round of translation to another. This Cyanothece sp. (strain PCC 7425 / ATCC 29141) protein is Ribosome-recycling factor.